The following is a 464-amino-acid chain: Cyclic 2,3-diphosphoglycerate synthetase (464 aa).

The protein belongs to the cyclic 2,3-diphosphoglycerate synthetase family.

It localises to the cytoplasm. It carries out the reaction (2R)-2,3-bisphosphoglycerate + ATP + H(+) = cyclic (2R)-2,3-bisphosphoglycerate + ADP + phosphate. Its activity is regulated as follows. Activity decreases in response to phosphate limitation. Its function is as follows. Catalyzes the formation of cyclic 2,3-diphosphoglycerate (cDPG) by formation of an intramolecular phosphoanhydride bond at the expense of ATP. Not able to catalyze cDPG hydrolysis. May be involved in osmotic balance. This is Cyclic 2,3-diphosphoglycerate synthetase (cpgS) from Methanothermobacter thermautotrophicus (strain ATCC 29096 / DSM 1053 / JCM 10044 / NBRC 100330 / Delta H) (Methanobacterium thermoautotrophicum).